The sequence spans 1071 residues: Carbamoyl phosphate synthase pyrimidine-specific large chain (1071 aa).

Residues 1-401 form a carboxyphosphate synthetic domain region; sequence MPKRVDINKI…SLLKAVRSLE (401 aa). Positions 129, 169, 175, 176, 208, 210, 215, 241, 242, 243, 284, and 298 each coordinate ATP. The 195-residue stretch at 133–327 folds into the ATP-grasp 1 domain; it reads RTLMNELNEP…IAKLAAKIAV (195 aa). Positions 284, 298, and 300 each coordinate Mg(2+). Residues Q284, E298, and N300 each contribute to the Mn(2+) site. Positions 402–546 are oligomerization domain; it reads ADVYHLELKD…YSTYEEENES (145 aa). Positions 547-929 are carbamoyl phosphate synthetic domain; it reads VVTDKKSVMV…ALYKALIASG (383 aa). Residues 671 to 861 enclose the ATP-grasp 2 domain; sequence EQALGELGVP…MANLATKIIL (191 aa). 10 residues coordinate ATP: R707, R746, L748, E752, G777, V778, H779, S780, Q820, and E832. Positions 820, 832, and 834 each coordinate Mg(2+). Residues Q820, E832, and N834 each coordinate Mn(2+). The region spanning 930–1071 is the MGS-like domain; sequence IQIPNYGSVL…NTNQEAAVTI (142 aa). The allosteric domain stretch occupies residues 930 to 1071; it reads IQIPNYGSVL…NTNQEAAVTI (142 aa).

The protein belongs to the CarB family. Composed of two chains; the small (or glutamine) chain promotes the hydrolysis of glutamine to ammonia, which is used by the large (or ammonia) chain to synthesize carbamoyl phosphate. Tetramer of heterodimers (alpha,beta)4. Interacts with BrxC. Mg(2+) is required as a cofactor. Requires Mn(2+) as cofactor.

It carries out the reaction hydrogencarbonate + L-glutamine + 2 ATP + H2O = carbamoyl phosphate + L-glutamate + 2 ADP + phosphate + 2 H(+). The catalysed reaction is hydrogencarbonate + NH4(+) + 2 ATP = carbamoyl phosphate + 2 ADP + phosphate + 2 H(+). The protein operates within amino-acid biosynthesis; L-arginine biosynthesis; carbamoyl phosphate from bicarbonate: step 1/1. It participates in pyrimidine metabolism; UMP biosynthesis via de novo pathway; (S)-dihydroorotate from bicarbonate: step 1/3. Small subunit of the glutamine-dependent carbamoyl phosphate synthetase (CPSase). CPSase catalyzes the formation of carbamoyl phosphate from the ammonia moiety of glutamine, carbonate, and phosphate donated by ATP, constituting the first step of the biosynthetic pathway leading to pyrimidine nucleotides. The large subunit (synthetase) binds the substrates ammonia (free or transferred from glutamine from the small subunit), hydrogencarbonate and ATP and carries out an ATP-coupled ligase reaction, activating hydrogencarbonate by forming carboxy phosphate which reacts with ammonia to form carbamoyl phosphate. The polypeptide is Carbamoyl phosphate synthase pyrimidine-specific large chain (pyrAB) (Bacillus subtilis (strain 168)).